Here is a 186-residue protein sequence, read N- to C-terminus: Elongation factor P (186 aa).

The protein belongs to the elongation factor P family.

The protein localises to the cytoplasm. The protein operates within protein biosynthesis; polypeptide chain elongation. Its function is as follows. Involved in peptide bond synthesis. Stimulates efficient translation and peptide-bond synthesis on native or reconstituted 70S ribosomes in vitro. Probably functions indirectly by altering the affinity of the ribosome for aminoacyl-tRNA, thus increasing their reactivity as acceptors for peptidyl transferase. This is Elongation factor P from Beutenbergia cavernae (strain ATCC BAA-8 / DSM 12333 / CCUG 43141 / JCM 11478 / NBRC 16432 / NCIMB 13614 / HKI 0122).